The primary structure comprises 499 residues: Probable malate:quinone oxidoreductase 4 (499 aa).

This sequence belongs to the MQO family. FAD is required as a cofactor.

It carries out the reaction (S)-malate + a quinone = a quinol + oxaloacetate. The protein operates within carbohydrate metabolism; tricarboxylic acid cycle; oxaloacetate from (S)-malate (quinone route): step 1/1. The sequence is that of Probable malate:quinone oxidoreductase 4 from Staphylococcus epidermidis (strain ATCC 12228 / FDA PCI 1200).